Reading from the N-terminus, the 314-residue chain is Ribosomal protein uL3 glutamine methyltransferase (314 aa).

Belongs to the protein N5-glutamine methyltransferase family. PrmB subfamily.

The enzyme catalyses L-glutaminyl-[ribosomal protein uL3] + S-adenosyl-L-methionine = N(5)-methyl-L-glutaminyl-[ribosomal protein uL3] + S-adenosyl-L-homocysteine + H(+). Its function is as follows. Methylates large ribosomal subunit protein uL3 on a specific glutamine residue. The polypeptide is Ribosomal protein uL3 glutamine methyltransferase (Shewanella oneidensis (strain ATCC 700550 / JCM 31522 / CIP 106686 / LMG 19005 / NCIMB 14063 / MR-1)).